Here is a 355-residue protein sequence, read N- to C-terminus: Diacylglycerol O-acyltransferase 2A (355 aa).

The next 2 helical transmembrane spans lie at 41–61 (LLWC…CSIP) and 62–78 (VLLW…ILVW). N-linked (GlcNAc...) asparagine glycosylation occurs at Asn-142.

The protein belongs to the diacylglycerol acyltransferase family.

It is found in the endoplasmic reticulum membrane. It catalyses the reaction an acyl-CoA + a 1,2-diacyl-sn-glycerol = a triacyl-sn-glycerol + CoA. Its pathway is glycerolipid metabolism; triacylglycerol biosynthesis. Catalyzes the terminal and only committed step in triacylglycerol synthesis by using diacylglycerol and fatty acyl CoA as substrates. Required for storage lipid synthesis. This Umbelopsis ramanniana (Oleaginous fungus) protein is Diacylglycerol O-acyltransferase 2A (DGAT2A).